Here is an 85-residue protein sequence, read N- to C-terminus: UPF0297 protein LBUL_1485 (85 aa).

It belongs to the UPF0297 family.

This Lactobacillus delbrueckii subsp. bulgaricus (strain ATCC BAA-365 / Lb-18) protein is UPF0297 protein LBUL_1485.